Reading from the N-terminus, the 483-residue chain is Cobyric acid synthase (483 aa).

The region spanning 248 to 435 (LLKVVVPVLP…LHGLFETPAA (188 aa)) is the GATase cobBQ-type domain. The active-site Nucleophile is C329. Residue H427 is part of the active site.

The protein belongs to the CobB/CobQ family. CobQ subfamily.

The protein operates within cofactor biosynthesis; adenosylcobalamin biosynthesis. Functionally, catalyzes amidations at positions B, D, E, and G on adenosylcobyrinic A,C-diamide. NH(2) groups are provided by glutamine, and one molecule of ATP is hydrogenolyzed for each amidation. In Pseudomonas fluorescens (strain ATCC BAA-477 / NRRL B-23932 / Pf-5), this protein is Cobyric acid synthase.